The sequence spans 307 residues: Methionyl-tRNA formyltransferase (307 aa).

Residue 109-112 (SLLP) participates in (6S)-5,6,7,8-tetrahydrofolate binding.

Belongs to the Fmt family.

It carries out the reaction L-methionyl-tRNA(fMet) + (6R)-10-formyltetrahydrofolate = N-formyl-L-methionyl-tRNA(fMet) + (6S)-5,6,7,8-tetrahydrofolate + H(+). Functionally, attaches a formyl group to the free amino group of methionyl-tRNA(fMet). The formyl group appears to play a dual role in the initiator identity of N-formylmethionyl-tRNA by promoting its recognition by IF2 and preventing the misappropriation of this tRNA by the elongation apparatus. The sequence is that of Methionyl-tRNA formyltransferase from Mycobacteroides abscessus (strain ATCC 19977 / DSM 44196 / CCUG 20993 / CIP 104536 / JCM 13569 / NCTC 13031 / TMC 1543 / L948) (Mycobacterium abscessus).